The sequence spans 1040 residues: Multidrug resistance protein MdtB (1040 aa).

12 consecutive transmembrane segments (helical) span residues 16-36 (FIMR…AGII), 342-362 (DTQF…YLFL), 369-389 (IIPG…MVFL), 396-416 (LTLM…IVVI), 440-460 (IGFT…PLLF), 472-492 (FAVT…TLTP), 537-557 (WLTL…WVFI), 863-883 (LGST…VLGV), 888-908 (FIHP…ALLA), 911-931 (LAGS…IGIV), 968-988 (ILMT…STGV), and 998-1018 (IGMV…TPVI).

This sequence belongs to the resistance-nodulation-cell division (RND) (TC 2.A.6) family. MdtB subfamily. Part of a tripartite efflux system composed of MdtA, MdtB and MdtC. MdtB forms a heteromultimer with MdtC.

It is found in the cell inner membrane. The protein is Multidrug resistance protein MdtB of Klebsiella pneumoniae subsp. pneumoniae (strain ATCC 700721 / MGH 78578).